The following is a 317-amino-acid chain: Apolipoprotein E (317 aa).

Residues 1–18 (MKVLWAALLVTFLAGCQA) form the signal peptide. 8 repeat units span residues 80 to 101 (ALMD…EQLT), 102 to 123 (PVAE…ARLG), 124 to 145 (ADME…AMLG), 146 to 167 (QSTE…KRLL), 168 to 189 (RDAD…EGAE), 190 to 211 (RGVS…VRAA), 212 to 233 (TVGS…ERLR), and 234 to 255 (ARME…EQVA). Residues 80 to 255 (ALMDETMKEL…RLDEVKEQVA (176 aa)) form an 8 X 22 AA approximate tandem repeats region. Residue Met-143 is modified to Methionine sulfoxide. Phosphoserine is present on Ser-147. The segment at 158–168 (HLRKLRKRLLR) is LDL and other lipoprotein receptors binding. 162-165 (LRKR) lines the heparin pocket. A lipid-binding and lipoprotein association region spans residues 210 to 290 (AATVGSLAGQ…SWFEPLVEDM (81 aa)). 229–236 (GERLRARM) lines the heparin pocket. A homooligomerization region spans residues 266–317 (QQIRLQAEAFQARLKSWFEPLVEDMQRQWAGLVEKVQAAMGTSAAPVPSDNH). Residues 278–290 (RLKSWFEPLVEDM) are specificity for association with VLDL.

This sequence belongs to the apolipoprotein A1/A4/E family. As to quaternary structure, homotetramer. May interact with ABCA1; functionally associated with ABCA1 in the biogenesis of HDLs. May interact with APP/A4 amyloid-beta peptide; the interaction is extremely stable in vitro but its physiological significance is unclear. May interact with MAPT. May interact with MAP2. In the cerebrospinal fluid, interacts with secreted SORL1. Interacts with PMEL; this allows the loading of PMEL luminal fragment on ILVs to induce fibril nucleation. Post-translationally, APOE exists as multiple glycosylated and sialylated glycoforms within cells and in plasma. The extent of glycosylation and sialylation are tissue and context specific. In terms of processing, glycated in plasma VLDL. Phosphorylated by FAM20C in the extracellular medium.

Its subcellular location is the secreted. It localises to the extracellular space. It is found in the extracellular matrix. The protein localises to the extracellular vesicle. The protein resides in the endosome. Its subcellular location is the multivesicular body. In terms of biological role, APOE is an apolipoprotein, a protein associating with lipid particles, that mainly functions in lipoprotein-mediated lipid transport between organs via the plasma and interstitial fluids. APOE is a core component of plasma lipoproteins and is involved in their production, conversion and clearance. Apolipoproteins are amphipathic molecules that interact both with lipids of the lipoprotein particle core and the aqueous environment of the plasma. As such, APOE associates with chylomicrons, chylomicron remnants, very low density lipoproteins (VLDL) and intermediate density lipoproteins (IDL) but shows a preferential binding to high-density lipoproteins (HDL). It also binds a wide range of cellular receptors including the LDL receptor/LDLR, the LDL receptor-related proteins LRP1, LRP2 and LRP8 and the very low-density lipoprotein receptor/VLDLR that mediate the cellular uptake of the APOE-containing lipoprotein particles. Finally, APOE also has a heparin-binding activity and binds heparan-sulfate proteoglycans on the surface of cells, a property that supports the capture and the receptor-mediated uptake of APOE-containing lipoproteins by cells. A main function of APOE is to mediate lipoprotein clearance through the uptake of chylomicrons, VLDLs, and HDLs by hepatocytes. APOE is also involved in the biosynthesis by the liver of VLDLs as well as their uptake by peripheral tissues ensuring the delivery of triglycerides and energy storage in muscle, heart and adipose tissues. By participating in the lipoprotein-mediated distribution of lipids among tissues, APOE plays a critical role in plasma and tissues lipid homeostasis. APOE is also involved in two steps of reverse cholesterol transport, the HDLs-mediated transport of cholesterol from peripheral tissues to the liver, and thereby plays an important role in cholesterol homeostasis. First, it is functionally associated with ABCA1 in the biogenesis of HDLs in tissues. Second, it is enriched in circulating HDLs and mediates their uptake by hepatocytes. APOE also plays an important role in lipid transport in the central nervous system, regulating neuron survival and sprouting. This chain is Apolipoprotein E (APOE), found in Gorilla gorilla gorilla (Western lowland gorilla).